Consider the following 376-residue polypeptide: MDVLAEANGTFALNLLKTLGKDNSKNVFFSPMSMSCALAMVYMGAKGNTAAQMAQVLSFNKSGSGGDIHQGFQSLLTEVNKTGTQYLLRTANRLFGEKSCDFLSSFRDSCQKFYQAEMEELDFISAVEKSRKHINTWVAEKTEGKIAELLSPGSVDPLTRLVLVNAVYFRGNWDEQFDKENTEERLFKVSKNEEKPVQMMFKQSTFKKTYIGEIFTQILVLPYVGKELNMIIMLPDETTDLRTVEKELTYEKFVEWTRLDMMDEEEVEVSLPRFKLEESYDMESVLRNLGMTDAFELGKADFSGMSQTDLSLSKVVHKSFVEVNEEGTEAAAATAAIMMMRCARFVPRFCADHPFLFFIQHSKTNGILFCGRFSSP.

N-acetylmethionine is present on Met1. Ser151 is subject to Phosphoserine. Lys195 bears the N6-acetyllysine mark.

The protein belongs to the serpin family. Ov-serpin subfamily. Forms a complex with the monomeric form of beta-tryptase.

The protein resides in the cytoplasm. In terms of biological role, inhibitor of cathepsin G, kallikrein-8 and thrombin. May play an important role in the inner ear in the protection against leakage of lysosomal content during stress. May be involved in the regulation of serine proteinases present in the brain or extravasated from the blood. This is Serpin B6 (SERPINB6) from Pongo abelii (Sumatran orangutan).